The primary structure comprises 292 residues: GTP cyclohydrolase FolE2 (292 aa).

The protein belongs to the GTP cyclohydrolase IV family.

The catalysed reaction is GTP + H2O = 7,8-dihydroneopterin 3'-triphosphate + formate + H(+). It participates in cofactor biosynthesis; 7,8-dihydroneopterin triphosphate biosynthesis; 7,8-dihydroneopterin triphosphate from GTP: step 1/1. Functionally, converts GTP to 7,8-dihydroneopterin triphosphate. This is GTP cyclohydrolase FolE2 from Staphylococcus carnosus (strain TM300).